Consider the following 876-residue polypeptide: MGKSLVIVESPAKAKTINKYLGKDFIVKSSVGHVRDLPTAGQTATPTGKAAAASTKKASTTDKEQQKREKERAALIKKMGVDPYHGWQANYQILPGKEKVVAELQKLAKDADSVYLATDLDREGEAIAWHLREIIGGDEKRYKRVVFNEITKNAIQQAFKQPGELNMDGVNAQQARRFMDRVVGFMVSPLLWKKVARGLSAGRVQSVAVKLLVEREREIKAFVPEEFWDINADTLTADKQDFRLLVAQKDGLAFKPVNETEALAAVAALNKAQYEVCKREDKPTTSKPSAPFITSTLQQAASTRLGYGVKKTMMLAQRLYEAGYITYMRTDSTNLSAEAVENLRGYITKHYGEAYLPSQPNVYGSKQNAQEAHEAIRPSDVTVTADDLEGMEADAHKLYALIWNQFVACQMTPAQYDSTTVSVKAAEYTLKAKGRILKFDGWTRVQRPLGKNEDQILPPVKVGDSLKLVSLDPKQHFTKPPARYTEAALVKELEKRGIGRPSTYASIISTIQDRGYVKVDQRRFFAEKMGEIVTDRLDENFDDLMNYDFTARMEEKLDQIAEGEVNWTAVLDEFFADFSRDLETAEQDESLGGMKPNHIVMTNILCPTCSRPMGIRTASTGVFLGCSGYGLPPKERCKTTINLGDEEGVINVLEEDVETAALRAKKRCPICETAMDAYLIDDKRKLHVCGNNPNCEGFIVEEGEFKVKGYEGPTVECDKCGSDMVLKNGRFGKYMGCTNDACKNTRKILKNGEVAPPKEEPVHFPELPCENSDAYFVLRDGASGLFFAASNFPKSRETRAPLVEELKRFAERLPEKYQYLTSAPAHDPDGLPAVVRFSRKEKEHYVRTETEGKPSGWMAVYQEGKWLVTDKRKNAK.

The Toprim domain maps to 3 to 150 (KSLVIVESPA…RYKRVVFNEI (148 aa)). Position 9 (Glu-9) interacts with Mg(2+). The interval 37 to 69 (LPTAGQTATPTGKAAAASTKKASTTDKEQQKRE) is disordered. Residues 38-58 (PTAGQTATPTGKAAAASTKKA) are compositionally biased toward low complexity. The span at 59 to 69 (STTDKEQQKRE) shows a compositional bias: basic and acidic residues. Asp-119 is a binding site for Mg(2+). Positions 166-582 (NMDGVNAQQA…EFFADFSRDL (417 aa)) constitute a Topo IA-type catalytic domain. Positions 200–205 (SAGRVQ) are interaction with DNA. Residue Tyr-327 is the O-(5'-phospho-DNA)-tyrosine intermediate of the active site. 2 C4-type zinc fingers span residues 668–695 (CPIC…NPNC) and 717–742 (CDKC…NDAC).

Belongs to the type IA topoisomerase family. In terms of assembly, monomer. Mg(2+) is required as a cofactor.

The enzyme catalyses ATP-independent breakage of single-stranded DNA, followed by passage and rejoining.. Releases the supercoiling and torsional tension of DNA, which is introduced during the DNA replication and transcription, by transiently cleaving and rejoining one strand of the DNA duplex. Introduces a single-strand break via transesterification at a target site in duplex DNA. The scissile phosphodiester is attacked by the catalytic tyrosine of the enzyme, resulting in the formation of a DNA-(5'-phosphotyrosyl)-enzyme intermediate and the expulsion of a 3'-OH DNA strand. The free DNA strand then undergoes passage around the unbroken strand, thus removing DNA supercoils. Finally, in the religation step, the DNA 3'-OH attacks the covalent intermediate to expel the active-site tyrosine and restore the DNA phosphodiester backbone. This Vibrio cholerae serotype O1 (strain ATCC 39315 / El Tor Inaba N16961) protein is DNA topoisomerase 1.